Reading from the N-terminus, the 202-residue chain is Matrix protein (202 aa).

The PPXY motif motif lies at 35-38; that stretch reads PPES. Residues 115-151 form an essential for glycoprotein binding region; it reads KIRRTLVFQWAESRGPLDGEELEYSQEITWDDDSEFI.

It belongs to the lyssavirus matrix protein family. Homomultimer. Interacts with nucleoprotein and with the cytoplasmic domain of glycoprotein.

The protein resides in the virion membrane. Its subcellular location is the host endomembrane system. Plays a major role in assembly and budding of virion. Completely covers the ribonucleoprotein coil and keep it in condensed bullet-shaped form. Inhibits viral transcription and stimulates replication. Plays a major role in early induction of TRAIL-mediated apoptosis in infected neurons. The chain is Matrix protein (M) from Myotis mystacinus (Whiskered bat).